Here is a 379-residue protein sequence, read N- to C-terminus: Homoserine O-succinyltransferase (379 aa).

Residues 51-360 form the AB hydrolase-1 domain; that stretch reads NAVLICHALS…DSPYGHDAFL (310 aa). The active-site Nucleophile is Ser157. Position 227 (Arg227) interacts with substrate. Residues Asp323 and His356 contribute to the active site. Asp357 lines the substrate pocket.

This sequence belongs to the AB hydrolase superfamily. MetX family. As to quaternary structure, homodimer.

Its subcellular location is the cytoplasm. It carries out the reaction L-homoserine + succinyl-CoA = O-succinyl-L-homoserine + CoA. The protein operates within amino-acid biosynthesis; L-methionine biosynthesis via de novo pathway; O-succinyl-L-homoserine from L-homoserine: step 1/1. In terms of biological role, transfers a succinyl group from succinyl-CoA to L-homoserine, forming succinyl-L-homoserine. The sequence is that of Homoserine O-succinyltransferase from Pseudomonas putida (strain GB-1).